We begin with the raw amino-acid sequence, 102 residues long: Small ribosomal subunit protein uS10 (102 aa).

Belongs to the universal ribosomal protein uS10 family. In terms of assembly, part of the 30S ribosomal subunit.

In terms of biological role, involved in the binding of tRNA to the ribosomes. The protein is Small ribosomal subunit protein uS10 of Kineococcus radiotolerans (strain ATCC BAA-149 / DSM 14245 / SRS30216).